Consider the following 1819-residue polypeptide: Non-reducing polyketide synthase nscA (1819 aa).

Residues 25–277 (RRLDQHSKDR…PLPVYDGLCH (253 aa)) are N-terminal acylcarrier protein transacylase domain (SAT). One can recognise a Ketosynthase family 3 (KS3) domain in the interval 413-846 (SSKLAIVGMA…GGNTTLLLED (434 aa)). Active-site for beta-ketoacyl synthase activity residues include C586, H721, and H764. The segment at 952-1249 (FTSQGAYYHG…MIPSAPAMSS (298 aa)) is malonyl-CoA:ACP transacylase (MAT) domain. The segment at 1339-1658 (TSLVHQITAE…RLLMDRFFSP (320 aa)) is product template (PT) domain. Residues 1343 to 1479 (HQITAETVEA…AMIRFEDPMA (137 aa)) form an N-terminal hotdog fold region. The region spanning 1343-1653 (HQITAETVEA…IRRVPRLLMD (311 aa)) is the PKS/mFAS DH domain. The active-site Proton acceptor; for dehydratase activity is H1375. The tract at residues 1507–1653 (ASRLSKPLAY…IRRVPRLLMD (147 aa)) is C-terminal hotdog fold. D1564 acts as the Proton donor; for dehydratase activity in catalysis. The tract at residues 1703–1742 (SSTMASKAPEPAPLLATSSESSTPKESPIVTPAESEREDP) is disordered. Over residues 1719 to 1730 (TSSESSTPKESP) the composition is skewed to low complexity. Positions 1742 to 1819 (PVDNNMISQC…EMTAWIEEYC (78 aa)) constitute a Carrier domain. S1779 carries the post-translational modification O-(pantetheine 4'-phosphoryl)serine.

Pantetheine 4'-phosphate is required as a cofactor.

It functions in the pathway secondary metabolite biosynthesis. In terms of biological role, non-reducing polyketide synthase; part of the gene cluster that mediates the biosynthesis of neosartoricin B, a prenylated anthracenone that probably exhibits T-cell antiproliferative activity, suggestive of a physiological role as an immunosuppressive agent. The non-reducing polyketide synthase nscA probably synthesizes and cyclizes the decaketide backbone. The hydrolase nscB then mediates the product release through hydrolysis followed by spontaneous decarboxylation. The prenyltransferase nscD catalyzes the addition of the dimethylallyl group to the aromatic C5. The FAD-dependent monooxygenase nscC is then responsible for the stereospecific hydroxylation at C2. Neosartoricin B can be converted into two additional compounds neosartoricins C and D. Neosartoricin C is a spirocyclic compound that is cyclized through the attack of C3 hydroxyl on C14, followed by dehydration. On the other hand, neosartoricin D is a further cyclized compound in which attack of C2 on C14 in neosartoricin C results in the formation of the acetal-containing dioxabicyclo-octanone ring. Both of these compounds are novel and possibly represent related metabolites of the gene cluster. The chain is Non-reducing polyketide synthase nscA from Trichophyton verrucosum (strain HKI 0517).